Here is a 259-residue protein sequence, read N- to C-terminus: NH(3)-dependent NAD(+) synthetase (259 aa).

33–40 (GLSGGIDS) serves as a coordination point for ATP. Aspartate 39 contributes to the Mg(2+) binding site. A deamido-NAD(+)-binding site is contributed by arginine 119. Threonine 139 lines the ATP pocket. Residue glutamate 144 coordinates Mg(2+). Deamido-NAD(+) contacts are provided by lysine 152 and aspartate 159. Positions 168 and 190 each coordinate ATP. 249-250 (HK) serves as a coordination point for deamido-NAD(+).

Belongs to the NAD synthetase family. As to quaternary structure, homodimer.

It catalyses the reaction deamido-NAD(+) + NH4(+) + ATP = AMP + diphosphate + NAD(+) + H(+). It functions in the pathway cofactor biosynthesis; NAD(+) biosynthesis; NAD(+) from deamido-NAD(+) (ammonia route): step 1/1. Its function is as follows. Catalyzes the ATP-dependent amidation of deamido-NAD to form NAD. Uses ammonia as a nitrogen source. The chain is NH(3)-dependent NAD(+) synthetase from Methanocaldococcus jannaschii (strain ATCC 43067 / DSM 2661 / JAL-1 / JCM 10045 / NBRC 100440) (Methanococcus jannaschii).